We begin with the raw amino-acid sequence, 552 residues long: Cation transporter HKT1;1 (552 aa).

Over 1–70 the chain is Cytoplasmic; sequence MHPPSLVLDT…QSYSFLVCKS (70 aa). 2 helical membrane-spanning segments follow: residues 71 to 91 and 133 to 153; these read NPLVVQLVYFVIISFAGFLAL and LWVLILLMLMGGEVFTSMLGL. At 154–221 the chain is on the cytoplasmic side; that stretch reads YFNNANANRN…TYNPCAVLVR (68 aa). Transmembrane regions (helical) follow at residues 222–242 and 291–311; these read IVTGYFVATVISSSVIIIIYF and VLLLLVIPQILAGNTLFSPLL. The Cytoplasmic portion of the chain corresponds to 312–348; sequence RLCVWVLGKVSGKAEYAYILQHPGETGYKHLHVRRNS. Transmembrane regions (helical) follow at residues 349–369 and 402–422; these read VYIVLSVTGLILLQVMFICSF and ILDISTLSPSTLLLFAVVMYL. The Cytoplasmic segment spans residues 423–448; the sequence is PSDASFLTANADNQPLTDKKTNSISR. The next 2 helical transmembrane spans lie at 449–471 and 524–544; these read ALWRNFTVNKLSCLAMFTFLACI and GFVGRWTEEGKLIVILVMFLG. The Cytoplasmic portion of the chain corresponds to 545 to 552; that stretch reads RLKEFILK.

It belongs to the TrkH potassium transport family. HKT (TC 2.A.38.3) subfamily. Expressed in shoots. In roots, expressed in epidermis, exodermis, cortex, and sieve elements and companion cells of phloem. In mature leaves, expressed in large highly vacuolated cells of the adaxial epidermis, phloem and xylem.

Its subcellular location is the membrane. It catalyses the reaction Na(+)(in) = Na(+)(out). Functionally, functions as a low-affinity sodium transporter. This Oryza sativa subsp. japonica (Rice) protein is Cation transporter HKT1;1.